A 28-amino-acid chain; its full sequence is NU-theraphotoxin-Preg1a (28 aa).

3 cysteine pairs are disulfide-bonded: C2–C19, C9–C22, and C18–C27.

In terms of tissue distribution, expressed by the venom gland.

The protein resides in the secreted. In terms of biological role, toxin that acts as an agonist on melanocortin receptors (MC1R, MC3R, MC5R, MC5R). After binding to MC1R, the peptide activates the hMC1R/Gs pathway, but after binding to MC4R, it is not able to activate or antagonize the MC4R/Gs pathway. Inhibits melanocyte stimulating hormone (MSH)-binding to human receptors (Ki=1.8 uM to MC1R, Ki=19.8 uM to MC3R, Ki=7.1 uM to MC4R, Ki=10.0 uM to MC5R). This toxin is structurally unrelated to the natural agonists. This Poecilotheria regalis (Indian ornamental tree spider) protein is NU-theraphotoxin-Preg1a.